The following is a 272-amino-acid chain: Acetylglutamate kinase (272 aa).

Substrate contacts are provided by residues 46–47 (GA), Arg-68, and Asn-166.

It belongs to the acetylglutamate kinase family. ArgB subfamily.

It is found in the cytoplasm. The enzyme catalyses N-acetyl-L-glutamate + ATP = N-acetyl-L-glutamyl 5-phosphate + ADP. It functions in the pathway amino-acid biosynthesis; L-arginine biosynthesis; N(2)-acetyl-L-ornithine from L-glutamate: step 2/4. In terms of biological role, catalyzes the ATP-dependent phosphorylation of N-acetyl-L-glutamate. The protein is Acetylglutamate kinase of Dehalococcoides mccartyi (strain ATCC BAA-2266 / KCTC 15142 / 195) (Dehalococcoides ethenogenes (strain 195)).